A 590-amino-acid polypeptide reads, in one-letter code: UvrABC system protein C (590 aa).

The GIY-YIG domain maps to 11–85; the sequence is ETPGVYLWKR…IKAHRPLYNV (75 aa). Residues 194–229 form the UVR domain; that stretch reads DGLLQELEAKMREAARRLEFERAAEIRDQMEALRAF.

This sequence belongs to the UvrC family. Interacts with UvrB in an incision complex.

The protein localises to the cytoplasm. The UvrABC repair system catalyzes the recognition and processing of DNA lesions. UvrC both incises the 5' and 3' sides of the lesion. The N-terminal half is responsible for the 3' incision and the C-terminal half is responsible for the 5' incision. The polypeptide is UvrABC system protein C (Thermus thermophilus (strain ATCC 27634 / DSM 579 / HB8)).